Here is a 295-residue protein sequence, read N- to C-terminus: Cyclin-G1 (295 aa).

The protein belongs to the cyclin family. Cyclin G subfamily.

It localises to the nucleus. May play a role in growth regulation. Is associated with G2/M phase arrest in response to DNA damage. May be an intermediate by which p53 mediates its role as an inhibitor of cellular proliferation. In Bos taurus (Bovine), this protein is Cyclin-G1 (CCNG1).